The following is a 300-amino-acid chain: Dihydroorotate dehydrogenase B (NAD(+)), catalytic subunit (300 aa).

FMN contacts are provided by residues S20 and 44 to 45; that span reads KG. Residues K44 and 68–72 each bind substrate; that span reads NSVGL. Residues N98 and N124 each coordinate FMN. Position 124 (N124) interacts with substrate. C127 functions as the Nucleophile in the catalytic mechanism. FMN contacts are provided by K162 and I188. 189-190 contributes to the substrate binding site; sequence NT. FMN is bound by residues G214, 240-241, and 262-263; these read GG and GT.

Belongs to the dihydroorotate dehydrogenase family. Type 1 subfamily. In terms of assembly, heterotetramer of 2 PyrK and 2 PyrD type B subunits. It depends on FMN as a cofactor.

The protein localises to the cytoplasm. It carries out the reaction (S)-dihydroorotate + NAD(+) = orotate + NADH + H(+). It functions in the pathway pyrimidine metabolism; UMP biosynthesis via de novo pathway; orotate from (S)-dihydroorotate (NAD(+) route): step 1/1. Its function is as follows. Catalyzes the conversion of dihydroorotate to orotate with NAD(+) as electron acceptor. This Caldicellulosiruptor saccharolyticus (strain ATCC 43494 / DSM 8903 / Tp8T 6331) protein is Dihydroorotate dehydrogenase B (NAD(+)), catalytic subunit (pyrD).